Consider the following 379-residue polypeptide: Putative glutamate--cysteine ligase 2 (379 aa).

This sequence belongs to the glutamate--cysteine ligase type 2 family. YbdK subfamily.

It carries out the reaction L-cysteine + L-glutamate + ATP = gamma-L-glutamyl-L-cysteine + ADP + phosphate + H(+). Its function is as follows. ATP-dependent carboxylate-amine ligase which exhibits weak glutamate--cysteine ligase activity. This chain is Putative glutamate--cysteine ligase 2, found in Roseiflexus sp. (strain RS-1).